The following is a 213-amino-acid chain: Orotate phosphoribosyltransferase (213 aa).

Lys-26 is a binding site for 5-phospho-alpha-D-ribose 1-diphosphate. 34 to 35 contacts orotate; sequence FF. Residues 72–73, Arg-99, Lys-100, Lys-103, His-105, and 124–132 contribute to the 5-phospho-alpha-D-ribose 1-diphosphate site; these read YK and DDVITAGTA. Orotate is bound by residues Thr-128 and Arg-156.

The protein belongs to the purine/pyrimidine phosphoribosyltransferase family. PyrE subfamily. Homodimer. The cofactor is Mg(2+).

The catalysed reaction is orotidine 5'-phosphate + diphosphate = orotate + 5-phospho-alpha-D-ribose 1-diphosphate. It functions in the pathway pyrimidine metabolism; UMP biosynthesis via de novo pathway; UMP from orotate: step 1/2. In terms of biological role, catalyzes the transfer of a ribosyl phosphate group from 5-phosphoribose 1-diphosphate to orotate, leading to the formation of orotidine monophosphate (OMP). This chain is Orotate phosphoribosyltransferase, found in Shigella sonnei (strain Ss046).